A 94-amino-acid chain; its full sequence is DNA-directed RNA polymerase subunit Rpo11 (94 aa).

The protein belongs to the archaeal Rpo11/eukaryotic RPB11/RPC19 RNA polymerase subunit family. Part of the RNA polymerase complex.

It localises to the cytoplasm. It carries out the reaction RNA(n) + a ribonucleoside 5'-triphosphate = RNA(n+1) + diphosphate. DNA-dependent RNA polymerase (RNAP) catalyzes the transcription of DNA into RNA using the four ribonucleoside triphosphates as substrates. In Natronomonas pharaonis (strain ATCC 35678 / DSM 2160 / CIP 103997 / JCM 8858 / NBRC 14720 / NCIMB 2260 / Gabara) (Halobacterium pharaonis), this protein is DNA-directed RNA polymerase subunit Rpo11.